The primary structure comprises 399 residues: MAKEKYERTKPHVNIGTIGHVDHGKTTLTAAISKVLHEEFPDVNPEYDFNQIDSAPEEAARGITINIAHIEYQTEKRHYAHVDCPGHADFVKNMITGAAQMDGAILVVAATDGPMAQTREHVLLARQVGVPKILVALNKCDMVDDEELIELVEEEVRDLLDENGFDRDCPVIHTSAYGALHDDAPDHEKWVQSVKDLMAAVDDYIPTPVHDLDKPFLMPIEDVFTISGRGTVVTGRVERGQLAVNTPVEIVGIRPTQTTTVTSIETFHKTMDACEAGDNTGLLLRGLGREDVERGQVVAKPGSVTPHTKFEGEVYVLTKDEGGRHSPFFSNYRPQFYFRTTDVTGVIELPEGVEMVQPGDHATFTVELIQPIAMEEGLTFAVREGGHTVGSGRVTKILA.

One can recognise a tr-type G domain in the interval 10-209 (KPHVNIGTIG…AVDDYIPTPV (200 aa)). The G1 stretch occupies residues 19-26 (GHVDHGKT). A GTP-binding site is contributed by 19 to 26 (GHVDHGKT). Residue Thr26 participates in Mg(2+) binding. The tract at residues 62-66 (GITIN) is G2. The G3 stretch occupies residues 83 to 86 (DCPG). GTP is bound by residues 83–87 (DCPGH) and 138–141 (NKCD). Residues 138–141 (NKCD) form a G4 region. Positions 175-177 (SAY) are G5.

Belongs to the TRAFAC class translation factor GTPase superfamily. Classic translation factor GTPase family. EF-Tu/EF-1A subfamily. In terms of assembly, monomer.

The protein localises to the cytoplasm. The catalysed reaction is GTP + H2O = GDP + phosphate + H(+). GTP hydrolase that promotes the GTP-dependent binding of aminoacyl-tRNA to the A-site of ribosomes during protein biosynthesis. The protein is Elongation factor Tu of Bifidobacterium longum subsp. infantis (strain ATCC 15697 / DSM 20088 / JCM 1222 / NCTC 11817 / S12).